Here is a 99-residue protein sequence, read N- to C-terminus: MSYGYGGYGNCGGGILGSVLGMAGGMAGGYGGYGGYGGYGRCGADNVFYRWRCCDYSPYECCIQLETWVVVFLVIFIIGFFVCLCACLAGCVWSARNRE.

This is an uncharacterized protein from Caenorhabditis elegans.